Here is a 438-residue protein sequence, read N- to C-terminus: Enolase (438 aa).

Residues His159 and Glu168 each contribute to the substrate site. Glu211 acts as the Proton donor in catalysis. Residues Asp246, Glu297, and Asp322 each contribute to the Mg(2+) site. Substrate is bound by residues Glu297 and Asp322. Lys347 serves as the catalytic Proton acceptor. Substrate contacts are provided by residues 374–377 and Lys398; that span reads SHRS.

This sequence belongs to the enolase family. Homodimer. It depends on Mg(2+) as a cofactor.

Its subcellular location is the cytoplasm. It carries out the reaction (2R)-2-phosphoglycerate = phosphoenolpyruvate + H2O. Its pathway is carbohydrate degradation; glycolysis; pyruvate from D-glyceraldehyde 3-phosphate: step 4/5. This chain is Enolase (enoA), found in Aspergillus fumigatus (strain ATCC MYA-4609 / CBS 101355 / FGSC A1100 / Af293) (Neosartorya fumigata).